The primary structure comprises 898 residues: Alanine--tRNA ligase (898 aa).

4 residues coordinate Zn(2+): H582, H586, C685, and H689.

The protein belongs to the class-II aminoacyl-tRNA synthetase family. Requires Zn(2+) as cofactor.

It is found in the cytoplasm. It catalyses the reaction tRNA(Ala) + L-alanine + ATP = L-alanyl-tRNA(Ala) + AMP + diphosphate. Its function is as follows. Catalyzes the attachment of alanine to tRNA(Ala) in a two-step reaction: alanine is first activated by ATP to form Ala-AMP and then transferred to the acceptor end of tRNA(Ala). Also edits incorrectly charged Ser-tRNA(Ala) and Gly-tRNA(Ala) via its editing domain. This Mycolicibacterium vanbaalenii (strain DSM 7251 / JCM 13017 / BCRC 16820 / KCTC 9966 / NRRL B-24157 / PYR-1) (Mycobacterium vanbaalenii) protein is Alanine--tRNA ligase.